Here is a 529-residue protein sequence, read N- to C-terminus: Mitochondrial inner membrane magnesium transporter MIT1 (529 aa).

Coiled coils occupy residues 336–388 (KIQL…LKNE) and 416–450 (LLET…LNLD). Residues 456–476 (FILLNAKISFSTLFCSICAVI) traverse the membrane as a helical segment. Topologically, residues 477–492 (TSLFGMNLKNFIEHND) are mitochondrial intermembrane. Residues 493-513 (YAFFIVSIFITSWSIVGIYFT) traverse the membrane as a helical segment. The Mitochondrial matrix portion of the chain corresponds to 514-529 (KNINTLLRFFDKYNVK).

The protein belongs to the CorA metal ion transporter (MIT) (TC 1.A.35) family.

It is found in the mitochondrion inner membrane. Mitochondrial inner membrane magnesium transporter required for mitochondrial magnesium homeostasis. Involved in the development of the sporozoite in the mosquito vector midgut. This Plasmodium falciparum (isolate 3D7) protein is Mitochondrial inner membrane magnesium transporter MIT1.